We begin with the raw amino-acid sequence, 410 residues long: Multifunctional CCA protein (410 aa).

ATP-binding residues include G8 and R11. CTP-binding residues include G8 and R11. Residues D21 and D23 each contribute to the Mg(2+) site. ATP is bound by residues R91, R137, and R140. Residues R91, R137, and R140 each contribute to the CTP site. One can recognise an HD domain in the interval 228-329; sequence TGVHVLSVLQ…LELLQSFDVY (102 aa).

Belongs to the tRNA nucleotidyltransferase/poly(A) polymerase family. Bacterial CCA-adding enzyme type 1 subfamily. In terms of assembly, monomer. Can also form homodimers and oligomers. The cofactor is Mg(2+). Requires Ni(2+) as cofactor.

The catalysed reaction is a tRNA precursor + 2 CTP + ATP = a tRNA with a 3' CCA end + 3 diphosphate. It carries out the reaction a tRNA with a 3' CCA end + 2 CTP + ATP = a tRNA with a 3' CCACCA end + 3 diphosphate. Its function is as follows. Catalyzes the addition and repair of the essential 3'-terminal CCA sequence in tRNAs without using a nucleic acid template. Adds these three nucleotides in the order of C, C, and A to the tRNA nucleotide-73, using CTP and ATP as substrates and producing inorganic pyrophosphate. tRNA 3'-terminal CCA addition is required both for tRNA processing and repair. Also involved in tRNA surveillance by mediating tandem CCA addition to generate a CCACCA at the 3' terminus of unstable tRNAs. While stable tRNAs receive only 3'-terminal CCA, unstable tRNAs are marked with CCACCA and rapidly degraded. In Pseudomonas aeruginosa (strain LESB58), this protein is Multifunctional CCA protein.